A 503-amino-acid polypeptide reads, in one-letter code: Probable cytosol aminopeptidase (503 aa).

Mn(2+)-binding residues include Lys-271 and Asp-276. Residue Lys-283 is part of the active site. The Mn(2+) site is built by Asp-294, Asp-353, and Glu-355. The active site involves Arg-357.

This sequence belongs to the peptidase M17 family. Mn(2+) serves as cofactor.

It localises to the cytoplasm. It catalyses the reaction Release of an N-terminal amino acid, Xaa-|-Yaa-, in which Xaa is preferably Leu, but may be other amino acids including Pro although not Arg or Lys, and Yaa may be Pro. Amino acid amides and methyl esters are also readily hydrolyzed, but rates on arylamides are exceedingly low.. The catalysed reaction is Release of an N-terminal amino acid, preferentially leucine, but not glutamic or aspartic acids.. Functionally, presumably involved in the processing and regular turnover of intracellular proteins. Catalyzes the removal of unsubstituted N-terminal amino acids from various peptides. This is Probable cytosol aminopeptidase from Chlorobaculum parvum (strain DSM 263 / NCIMB 8327) (Chlorobium vibrioforme subsp. thiosulfatophilum).